A 185-amino-acid polypeptide reads, in one-letter code: MKLIAGLGNPGKKYDQTKHNTGFMALDHYLSKNNLDLDKDKFEGLWTKQKVNGEDVIFLEPQTFMNDSGKSIAQVANFFKIAPEDILVIHDDMDMPIGKIRIRANGKSGGHNGIKSIMACLGTNNFNRLKIGIRHPQKESVVSWVLSPFNDEQQKLMDAAFEVSENIINDFIKGKNAQYLMNQYN.

Tyrosine 14 is a tRNA binding site. Catalysis depends on histidine 19, which acts as the Proton acceptor. Positions 64, 66, and 112 each coordinate tRNA.

The protein belongs to the PTH family. Monomer.

The protein resides in the cytoplasm. The enzyme catalyses an N-acyl-L-alpha-aminoacyl-tRNA + H2O = an N-acyl-L-amino acid + a tRNA + H(+). Its function is as follows. Hydrolyzes ribosome-free peptidyl-tRNAs (with 1 or more amino acids incorporated), which drop off the ribosome during protein synthesis, or as a result of ribosome stalling. Catalyzes the release of premature peptidyl moieties from peptidyl-tRNA molecules trapped in stalled 50S ribosomal subunits, and thus maintains levels of free tRNAs and 50S ribosomes. In Lactobacillus gasseri (strain ATCC 33323 / DSM 20243 / BCRC 14619 / CIP 102991 / JCM 1131 / KCTC 3163 / NCIMB 11718 / NCTC 13722 / AM63), this protein is Peptidyl-tRNA hydrolase.